Reading from the N-terminus, the 100-residue chain is Urease subunit gamma (100 aa).

The protein belongs to the urease gamma subunit family. In terms of assembly, heterotrimer of UreA (gamma), UreB (beta) and UreC (alpha) subunits. Three heterotrimers associate to form the active enzyme.

The protein localises to the cytoplasm. It carries out the reaction urea + 2 H2O + H(+) = hydrogencarbonate + 2 NH4(+). The protein operates within nitrogen metabolism; urea degradation; CO(2) and NH(3) from urea (urease route): step 1/1. This chain is Urease subunit gamma, found in Cereibacter sphaeroides (strain ATCC 17025 / ATH 2.4.3) (Rhodobacter sphaeroides).